Here is a 335-residue protein sequence, read N- to C-terminus: DNA-directed RNA polymerase subunit alpha (335 aa).

Positions 1 to 233 (MMLNATEFLT…QQISIFVDLE (233 aa)) are alpha N-terminal domain (alpha-NTD). An alpha C-terminal domain (alpha-CTD) region spans residues 247–335 (VDPVLLRPVD…VDDRFSYRSR (89 aa)).

The protein belongs to the RNA polymerase alpha chain family. As to quaternary structure, homodimer. The RNAP catalytic core consists of 2 alpha, 1 beta, 1 beta' and 1 omega subunit. When a sigma factor is associated with the core the holoenzyme is formed, which can initiate transcription.

It catalyses the reaction RNA(n) + a ribonucleoside 5'-triphosphate = RNA(n+1) + diphosphate. In terms of biological role, DNA-dependent RNA polymerase catalyzes the transcription of DNA into RNA using the four ribonucleoside triphosphates as substrates. In Psychrobacter sp. (strain PRwf-1), this protein is DNA-directed RNA polymerase subunit alpha.